The following is a 218-amino-acid chain: Glutathione S-transferase Mu 2 (218 aa).

The GST N-terminal domain occupies 2-88 (PMTLGYWDIR…YLGRKHNLCG (87 aa)). 7–8 (YW) contacts glutathione. Phosphoserine is present on residues serine 27 and serine 44. Glutathione contacts are provided by residues 43–46 (RSQW), lysine 50, 59–60 (NL), and 72–73 (QS). Residues 90-214 (TEEERIRVDV…SKPIFAKMAF (125 aa)) form the GST C-terminal domain. Tyrosine 116 is a substrate binding site. Serine 117 bears the Phosphoserine mark.

This sequence belongs to the GST superfamily. Mu family. Homodimer or heterodimer.

The protein resides in the cytoplasm. The enzyme catalyses RX + glutathione = an S-substituted glutathione + a halide anion + H(+). The catalysed reaction is 11(S)-hydroxy-14(S),15(S)-epoxy-(5Z,8Z,12E)-eicosatrienoate + glutathione = (11S,15S)-dihydroxy-14(R)-S-glutathionyl-(5Z,8Z,12E)-eicosatrienoate. Its function is as follows. Conjugation of reduced glutathione to a wide number of exogenous and endogenous hydrophobic electrophiles. Participates in the formation of novel hepoxilin regioisomers. This is Glutathione S-transferase Mu 2 from Rattus norvegicus (Rat).